A 586-amino-acid polypeptide reads, in one-letter code: Septin-9 (586 aa).

Residue M1 is modified to N-acetylmethionine. Low complexity predominate over residues 1–14 (MKKSYSGGTRTSSG). 3 disordered regions span residues 1–49 (MKKS…RVQT), 62–108 (KFQD…SRRT), and 134–268 (RAEV…PASR). Residues S22 and S30 each carry the phosphoserine modification. T38, T42, and T49 each carry phosphothreonine. Position 62 is an N6-acetyllysine (K62). Phosphoserine is present on residues S82, S85, S89, and S96. Positions 134–151 (RAEVLGHKTPEPAPRRTE) are enriched in basic and acidic residues. Residue T142 is modified to Phosphothreonine. At Y278 the chain carries Phosphotyrosine. A Septin-type G domain is found at 295–567 (QGFEFNIMVV…EAYRVKRLNE (273 aa)). The G1 motif stretch occupies residues 305 to 312 (GQSGLGKS). 305 to 312 (GQSGLGKS) contributes to the GTP binding site. Phosphoserine is present on residues S327 and S332. GTP contacts are provided by residues T339, G365, 445–453 (KADTLTLEE), G501, and R516. Residues 362–365 (DTPG) are G3 motif. Positions 444-447 (AKAD) are G4 motif.

It belongs to the TRAFAC class TrmE-Era-EngA-EngB-Septin-like GTPase superfamily. Septin GTPase family. As to quaternary structure, septins polymerize into heterooligomeric protein complexes that form filaments, and associate with cellular membranes, actin filaments, and microtubules. GTPase activity is required for filament formation. Interacts with SEPTIN2, SEPTIN6, SEPTIN7, SEPTIN11 and SEPTIN14. Interacts with RTKN and ARHGEF18. In a mesenchymal cell line, Rho/RTKN signals cause disruption of wild-type septin filaments, but not of those containing isoform 2 variants HNA Trp-106 and Phe-111. In a mesenchymal cell line, isoform 2 variants HNA Trp-106 and Phe-111, but not wild type, form filaments with SEPTIN4. As to expression, widely expressed. Isoforms are differentially expressed in testes, kidney, liver heart, spleen, brain, peripheral blood leukocytes, skeletal muscle and kidney. Specific isoforms appear to demonstrate tissue specificity. Isoform 5 is the most highly expressed in fetal tissue. Isoform 1 is detected in all tissues except the brain and thymus, while isoform 2, isoform 3, and isoform 4 are detected at low levels in approximately half of the fetal tissues.

Its subcellular location is the cytoplasm. The protein localises to the cytoskeleton. Its function is as follows. Filament-forming cytoskeletal GTPase. May play a role in cytokinesis (Potential). May play a role in the internalization of 2 intracellular microbial pathogens, Listeria monocytogenes and Shigella flexneri. The polypeptide is Septin-9 (Homo sapiens (Human)).